A 132-amino-acid chain; its full sequence is Glycine cleavage system H protein (132 aa).

The Lipoyl-binding domain maps to 24-106 (LVRIGISAFA…HGEGWLLVVR (83 aa)). At K65 the chain carries N6-lipoyllysine.

The protein belongs to the GcvH family. The glycine cleavage system is composed of four proteins: P, T, L and H. (R)-lipoate is required as a cofactor.

The glycine cleavage system catalyzes the degradation of glycine. The H protein shuttles the methylamine group of glycine from the P protein to the T protein. The sequence is that of Glycine cleavage system H protein from Prochlorococcus marinus (strain MIT 9313).